The sequence spans 353 residues: Colistin resistance protein EmrA (353 aa).

Residues 21–41 traverse the membrane as a helical segment; that stretch reads WGVFSVLLLFLVAGILYYFFV. The stretch at 132-204 forms a coiled coil; it reads VVAAQADLAR…QASRAQLLAD (73 aa).

Belongs to the membrane fusion protein (MFP) (TC 8.A.1) family.

It localises to the cell inner membrane. Its function is as follows. Probably part of an efflux pump system that contributes to adaptation to osmotic stress and resistance to colistin. The chain is Colistin resistance protein EmrA from Acinetobacter baumannii (strain ATCC 17978 / DSM 105126 / CIP 53.77 / LMG 1025 / NCDC KC755 / 5377).